Reading from the N-terminus, the 130-residue chain is Large ribosomal subunit protein bL20 (130 aa).

This sequence belongs to the bacterial ribosomal protein bL20 family.

Its function is as follows. Binds directly to 23S ribosomal RNA and is necessary for the in vitro assembly process of the 50S ribosomal subunit. It is not involved in the protein synthesizing functions of that subunit. The chain is Large ribosomal subunit protein bL20 from Leifsonia xyli subsp. xyli (strain CTCB07).